A 176-amino-acid polypeptide reads, in one-letter code: Viral interleukin-10 homolog (176 aa).

A signal peptide spans Met-1–Pro-25. Intrachain disulfides connect Cys-38–Cys-128 and Cys-82–Cys-133. Asn-152 carries N-linked (GlcNAc...) asparagine; by host glycosylation.

The protein belongs to the IL-10 family. As to quaternary structure, homodimer; disulfide-linked.

It localises to the secreted. In terms of biological role, functional viral IL-10 homolog. Can bind to the human IL-10 receptor and compete with human IL-10 for binding sites. Requires both subunits of the human IL-10 receptor complex to induce signal transduction events and biological activities. IL-10 signaling pathway has several immunosuppressive activities that are exploited by the virus. Inhibits TLR-induced type I interferon production in host plasmacytoid dendritic cells. The protein is Viral interleukin-10 homolog (UL111A) of Homo sapiens (Human).